Here is a 274-residue protein sequence, read N- to C-terminus: Bis(5'-nucleosyl)-tetraphosphatase, symmetrical (274 aa).

This sequence belongs to the Ap4A hydrolase family.

It catalyses the reaction P(1),P(4)-bis(5'-adenosyl) tetraphosphate + H2O = 2 ADP + 2 H(+). Functionally, hydrolyzes diadenosine 5',5'''-P1,P4-tetraphosphate to yield ADP. This chain is Bis(5'-nucleosyl)-tetraphosphatase, symmetrical, found in Erwinia tasmaniensis (strain DSM 17950 / CFBP 7177 / CIP 109463 / NCPPB 4357 / Et1/99).